A 1228-amino-acid polypeptide reads, in one-letter code: Calcium-transporting ATPase (1228 aa).

Over Met1 to Asp63 the chain is Cytoplasmic. Residues Leu64 to Leu81 form a helical membrane-spanning segment. Topologically, residues Leu82–Cys92 are extracellular. A helical membrane pass occupies residues Asp93–Val112. Over Trp113 to Lys270 the chain is Cytoplasmic. A helical membrane pass occupies residues Ile271–Ile291. Residues His292 to Leu300 are Extracellular-facing. The chain crosses the membrane as a helical span at residues Tyr301–Val321. The Cytoplasmic segment spans residues Ile322–Arg974. Asp358 serves as the catalytic 4-aspartylphosphate intermediate. Disordered regions lie at residues Met452–Lys478 and Met562–Ala613. Polar residues predominate over residues Phe589–Asn604. Lys716 contributes to the ATP binding site. Residues Tyr975–Gly994 traverse the membrane as a helical segment. Over Ile995–Ala1000 the chain is Extracellular. A helical transmembrane segment spans residues Pro1001–Phe1021. The Cytoplasmic segment spans residues Asn1022–Asn1042. A helical membrane pass occupies residues Gly1043–Trp1067. Residues Phe1068–Ile1118 are Extracellular-facing. A helical transmembrane segment spans residues Lys1119 to Leu1140. Topologically, residues Ser1141 to Pro1151 are cytoplasmic. A helical transmembrane segment spans residues Trp1152 to Leu1172. At Tyr1173–Pro1185 the chain is on the extracellular side. A helical membrane pass occupies residues Leu1186–Glu1206. Residues Ile1207–Asp1228 are Cytoplasmic-facing.

Belongs to the cation transport ATPase (P-type) (TC 3.A.3) family.

It is found in the membrane. It carries out the reaction Ca(2+)(in) + ATP + H2O = Ca(2+)(out) + ADP + phosphate + H(+). Its function is as follows. This magnesium-dependent enzyme catalyzes the hydrolysis of ATP coupled with the transport of the calcium. The protein is Calcium-transporting ATPase (ATP6) of Plasmodium falciparum (isolate K1 / Thailand).